Reading from the N-terminus, the 285-residue chain is GTP cyclohydrolase 1 type 2 homolog (285 aa).

5 residues coordinate a divalent metal cation: His-65, His-66, Asp-104, His-230, and Glu-234.

The protein belongs to the GTP cyclohydrolase I type 2/NIF3 family. As to quaternary structure, homohexamer.

This Streptomyces coelicolor (strain ATCC BAA-471 / A3(2) / M145) protein is GTP cyclohydrolase 1 type 2 homolog.